Here is a 57-residue protein sequence, read N- to C-terminus: Potassium channel toxin alpha-KTx 8.8 (57 aa).

The N-terminal stretch at 1–19 (MCRLYAIILIVLVMNVIMT) is a signal peptide. Positions 20 to 28 (IIPDSKVEV) are excised as a propeptide. Disulfide bonds link C31-C47, C34-C52, and C38-C54.

It belongs to the short scorpion toxin superfamily. Potassium channel inhibitor family. Alpha-KTx 08 subfamily. In terms of processing, contains 3 disulfide bonds. Expressed by the venom gland.

The protein resides in the secreted. In terms of biological role, selectively inhibits voltage-gated potassium channels rKv1.2/KCNA2 (IC(50)=331 nM) and hKv1.3/KCNA3 (IC(50)=503 nM). Partially inihibts rKv1.6/KCNA6 (IC(50)=9983 nM). This chain is Potassium channel toxin alpha-KTx 8.8, found in Orthochirus scrobiculosus (Central Asian scorpion).